Reading from the N-terminus, the 139-residue chain is Putative nickel-responsive regulator (139 aa).

Residues His79, His90, His92, and Cys98 each coordinate Ni(2+).

This sequence belongs to the transcriptional regulatory CopG/NikR family. It depends on Ni(2+) as a cofactor.

Transcriptional regulator. This is Putative nickel-responsive regulator from Anaeromyxobacter sp. (strain K).